Here is a 424-residue protein sequence, read N- to C-terminus: Serine--tRNA ligase (424 aa).

230–232 provides a ligand contact to L-serine; that stretch reads TAE. 261-263 serves as a coordination point for ATP; that stretch reads RSE. L-serine is bound at residue E284. 348–351 contributes to the ATP binding site; the sequence is EISS. Position 384 (S384) interacts with L-serine.

It belongs to the class-II aminoacyl-tRNA synthetase family. Type-1 seryl-tRNA synthetase subfamily. In terms of assembly, homodimer. The tRNA molecule binds across the dimer.

The protein resides in the cytoplasm. It catalyses the reaction tRNA(Ser) + L-serine + ATP = L-seryl-tRNA(Ser) + AMP + diphosphate + H(+). It carries out the reaction tRNA(Sec) + L-serine + ATP = L-seryl-tRNA(Sec) + AMP + diphosphate + H(+). It functions in the pathway aminoacyl-tRNA biosynthesis; selenocysteinyl-tRNA(Sec) biosynthesis; L-seryl-tRNA(Sec) from L-serine and tRNA(Sec): step 1/1. Its function is as follows. Catalyzes the attachment of serine to tRNA(Ser). Is also able to aminoacylate tRNA(Sec) with serine, to form the misacylated tRNA L-seryl-tRNA(Sec), which will be further converted into selenocysteinyl-tRNA(Sec). The chain is Serine--tRNA ligase from Streptococcus pneumoniae serotype 19F (strain G54).